Here is a 414-residue protein sequence, read N- to C-terminus: 2,3-diketo-5-methylthiopentyl-1-phosphate enolase (414 aa).

K99 (proton acceptor) is an active-site residue. Residues K148, 174–177 (KDDE), H265, G338, and 360–361 (GG) each bind substrate. Residues K174, D176, and E177 each coordinate Mg(2+). The residue at position 174 (K174) is an N6-carboxylysine.

It belongs to the RuBisCO large chain family. Type IV subfamily. In terms of assembly, homodimer. Mg(2+) serves as cofactor.

The enzyme catalyses 5-methylsulfanyl-2,3-dioxopentyl phosphate = 2-hydroxy-5-methylsulfanyl-3-oxopent-1-enyl phosphate. The protein operates within amino-acid biosynthesis; L-methionine biosynthesis via salvage pathway; L-methionine from S-methyl-5-thio-alpha-D-ribose 1-phosphate: step 3/6. Catalyzes the enolization of 2,3-diketo-5-methylthiopentyl-1-phosphate (DK-MTP-1-P) into 2-hydroxy-3-keto-5-methylthiopentenyl-1-phosphate (HK-MTPenyl-1-P). This is 2,3-diketo-5-methylthiopentyl-1-phosphate enolase from Bacillus cereus (strain G9842).